The chain runs to 301 residues: GTPase Era (301 aa).

The 169-residue stretch at 7–175 (YCGFIAIVGR…AGIVRKHLPE (169 aa)) folds into the Era-type G domain. Residues 15 to 22 (GRPNVGKS) are G1. 15-22 (GRPNVGKS) lines the GTP pocket. The segment at 41 to 45 (QTTRH) is G2. The segment at 62–65 (DTPG) is G3. GTP contacts are provided by residues 62–66 (DTPGL) and 124–127 (NKVD). Residues 124–127 (NKVD) form a G4 region. Residues 154–156 (LSA) form a G5 region. Residues 198–283 (IREKLMRFLG…HLELWVKVKS (86 aa)) enclose the KH type-2 domain.

This sequence belongs to the TRAFAC class TrmE-Era-EngA-EngB-Septin-like GTPase superfamily. Era GTPase family. In terms of assembly, monomer.

Its subcellular location is the cytoplasm. It localises to the cell inner membrane. An essential GTPase that binds both GDP and GTP, with rapid nucleotide exchange. Plays a role in 16S rRNA processing and 30S ribosomal subunit biogenesis and possibly also in cell cycle regulation and energy metabolism. This is GTPase Era from Enterobacter sp. (strain 638).